The chain runs to 801 residues: Sucrose synthase isoform 2 (801 aa).

The tract at residues 271-748 (MIFNVVILSP…GLKRIQEKYT (478 aa)) is GT-B glycosyltransferase.

Belongs to the glycosyltransferase 1 family. Plant sucrose synthase subfamily. Homotetramer. As to expression, exclusively expressed in flowers.

It carries out the reaction an NDP-alpha-D-glucose + D-fructose = a ribonucleoside 5'-diphosphate + sucrose + H(+). In terms of biological role, sucrose-cleaving enzyme that provides UDP-glucose and fructose for various metabolic pathways. The polypeptide is Sucrose synthase isoform 2 (Daucus carota (Wild carrot)).